Consider the following 767-residue polypeptide: Actin filament-associated protein 1-like 1 (767 aa).

Positions 83 to 97 (LRDMSDDGERSKEAS) are enriched in basic and acidic residues. Residues 83–145 (LRDMSDDGER…KSPEYISSHN (63 aa)) are disordered. A phosphoserine mark is found at serine 87, serine 93, serine 97, serine 103, and serine 152. The segment covering 164–173 (SYPTTRMNGE) has biased composition (polar residues). The segment at 164 to 210 (SYPTTRMNGESKSSYNDSDAMSSSYESYDEEEEEEKGRQPKHQWPSE) is disordered. Residues 174–189 (SKSSYNDSDAMSSSYE) are compositionally biased toward low complexity. The region spanning 219–315 (DCRICAFLLR…WLKVIREVSR (97 aa)) is the PH 1 domain. Serine 328 and serine 342 each carry phosphoserine. The segment at 341 to 381 (LSQEKQNSDSDSLGMNDSSSTLSRREACEHGKGKKNSLAEL) is disordered. Polar residues predominate over residues 349–362 (DSDSLGMNDSSSTL). Positions 417-511 (EAPCCGYLNV…WLGLLLVEMG (95 aa)) constitute a PH 2 domain. Position 556 is a phosphotyrosine (tyrosine 556). The segment at 563–605 (KVQDEEPQRPTGAQVKRHASSCSEKSHRADPQVKVKRHASSAN) is disordered. The span at 586–595 (EKSHRADPQV) shows a compositional bias: basic and acidic residues. Residues 610-700 (GKNRAEEDAR…AVKERLQQSL (91 aa)) adopt a coiled-coil conformation. The disordered stretch occupies residues 704-767 (PALGLSVSSK…KAKEWEMKKT (64 aa)). Residues 709 to 733 (SVSSKSKSQETTNKPQSSVPEQSLP) show a composition bias toward polar residues. Serine 746 bears the Phosphoserine mark. Positions 758–767 (KAKEWEMKKT) are enriched in basic and acidic residues.

In terms of assembly, interacts with CTTN.

Its subcellular location is the cytoplasm. The protein resides in the cell projection. It is found in the podosome. The protein localises to the invadopodium. Its function is as follows. May be involved in podosome and invadosome formation. The polypeptide is Actin filament-associated protein 1-like 1 (Afap1l1) (Rattus norvegicus (Rat)).